The sequence spans 130 residues: Large ribosomal subunit protein bL12 (130 aa).

This sequence belongs to the bacterial ribosomal protein bL12 family. Homodimer. Part of the ribosomal stalk of the 50S ribosomal subunit. Forms a multimeric L10(L12)X complex, where L10 forms an elongated spine to which 2 to 4 L12 dimers bind in a sequential fashion. Binds GTP-bound translation factors.

Functionally, forms part of the ribosomal stalk which helps the ribosome interact with GTP-bound translation factors. Is thus essential for accurate translation. The protein is Large ribosomal subunit protein bL12 of Parafrankia sp. (strain EAN1pec).